Consider the following 1349-residue polypeptide: Spike glycoprotein (1349 aa).

An N-terminal signal peptide occupies residues 1-13; it reads MFFILLITLPSVF. Topologically, residues 14–1293 are extracellular; it reads AVIGDLKCNT…GTYEYYVKWP (1280 aa). The 284-residue stretch at 15–298 folds into the BetaCoV S1-NTD domain; the sequence is VIGDLKCNTS…DFMSEIMCKT (284 aa). 7 disulfide bridges follow: Cys21–Cys165, Cys160–Cys193, Cys172–Cys252, Cys286–Cys296, Cys331–Cys356, Cys374–Cys427, and Cys386–Cys601. Residues Asn22, Asn59, and Asn133 are each glycosylated (N-linked (GlcNAc...) asparagine; by host). Asn198 carries an N-linked (GlcNAc...) asparagine; by host glycan. One can recognise a BetaCoV S1-CTD domain in the interval 329-603; it reads PNCDIEAWLN…DVNSGTTCST (275 aa). Residues Asn437, Asn456, Asn512, Asn611, Asn635, Asn662, Asn682, Asn700, Asn725, Asn774, and Asn881 are each glycosylated (N-linked (GlcNAc...) asparagine; by host). 2 fusion peptide regions span residues 900 to 921 and 919 to 939; these read SAIE…VQAY and QAYN…VQSY. Asn923 carries an N-linked (GlcNAc...) asparagine; by host glycan. An intrachain disulfide couples Cys924 to Cys935. Positions 1000 to 1050 are heptad repeat 1; the sequence is QKLIASAFNNALDSIQEGFDATNSALVKIQAVVNANAEALNNLLQQLSNRF. Positions 1029–1073 form a coiled coil; the sequence is QAVVNANAEALNNLLQQLSNRFGAISASLQEILSRLDALEAKAQI. N-linked (GlcNAc...) asparagine; by host glycans are attached at residues Asn1180, Asn1210, Asn1220, Asn1239, Asn1253, and Asn1274. The segment at 1244–1282 is heptad repeat 2; the sequence is APDLSFDYINVTFLDLQDEMNRLQEAIKVLNHSYINLKD. A coiled-coil region spans residues 1255 to 1283; the sequence is TFLDLQDEMNRLQEAIKVLNHSYINLKDI. Residues 1294–1314 form a helical membrane-spanning segment; that stretch reads WYVWLLICLAGVVMLVLLFFI. Over 1315 to 1349 the chain is Cytoplasmic; the sequence is CCCTGCGTSCFKKCGGCFDDYTGHQEFVIKTSHDD. The KxHxx signature appears at 1345–1349; sequence TSHDD.

The protein belongs to the betacoronaviruses spike protein family. Homotrimer; each monomer consists of a S1 and a S2 subunit. The resulting peplomers protrude from the virus surface as spikes. Post-translationally, specific enzymatic cleavages in vivo yield mature proteins. The precursor is processed into S1 and S2 by host cell furin or another cellular protease to yield the mature S1 and S2 proteins. Additionally, a second cleavage leads to the release of a fusion peptide after viral attachment to host cell receptor. The cytoplasmic Cys-rich domain is palmitoylated. Spike glycoprotein is digested within host endosomes.

It is found in the virion membrane. It localises to the host endoplasmic reticulum-Golgi intermediate compartment membrane. Its subcellular location is the host cell membrane. Its function is as follows. Attaches the virion to the cell membrane by interacting with host receptor, initiating the infection. Mediates fusion of the virion and cellular membranes by acting as a class I viral fusion protein. Under the current model, the protein has at least three conformational states: pre-fusion native state, pre-hairpin intermediate state, and post-fusion hairpin state. During viral and target cell membrane fusion, the coiled coil regions (heptad repeats) assume a trimer-of-hairpins structure, positioning the fusion peptide in close proximity to the C-terminal region of the ectodomain. The formation of this structure appears to drive apposition and subsequent fusion of viral and target cell membranes. Functionally, acts as a viral fusion peptide which is unmasked following S2 cleavage occurring upon virus endocytosis. In Porcine hemagglutinating encephalomyelitis virus (strain IAF-404) (HEV), this protein is Spike glycoprotein.